Here is a 682-residue protein sequence, read N- to C-terminus: Potassium-transporting ATPase ATP-binding subunit (682 aa).

4 helical membrane-spanning segments follow: residues 34–54, 62–82, 219–239, and 254–274; these read PVMFIVWIGSLLTTCISIAMA, ALFSAAISGWLWVTVLFANFA, IALTILLIALTIVFLLATATL, and VLVALLVCLIPTTIGGLLSAI. Catalysis depends on Asp-307, which acts as the 4-aspartylphosphate intermediate. ATP is bound by residues Asp-344, Glu-348, 377–384, and Lys-395; that span reads FTAQSRMS. 2 residues coordinate Mg(2+): Asp-518 and Asp-522. 3 consecutive transmembrane segments (helical) span residues 588–608, 616–636, and 662–682; these read FAIIPAAFAATYPQLNALNIM, AILSAVIFNALIIVFLIPLAL, and LLVPFIGIKVIDLLLTICGLV.

The protein belongs to the cation transport ATPase (P-type) (TC 3.A.3) family. Type IA subfamily. As to quaternary structure, the system is composed of three essential subunits: KdpA, KdpB and KdpC.

It is found in the cell inner membrane. It carries out the reaction K(+)(out) + ATP + H2O = K(+)(in) + ADP + phosphate + H(+). Part of the high-affinity ATP-driven potassium transport (or Kdp) system, which catalyzes the hydrolysis of ATP coupled with the electrogenic transport of potassium into the cytoplasm. This subunit is responsible for energy coupling to the transport system and for the release of the potassium ions to the cytoplasm. The sequence is that of Potassium-transporting ATPase ATP-binding subunit from Escherichia coli O81 (strain ED1a).